A 479-amino-acid chain; its full sequence is Sulfate adenylyltransferase subunit 1 (479 aa).

One can recognise a tr-type G domain in the interval 25-239; the sequence is KSLLRFLTCG…EVLETVDIQR (215 aa). A G1 region spans residues 34–41; the sequence is GSVDDGKS. 34-41 contacts GTP; that stretch reads GSVDDGKS. The tract at residues 92–96 is G2; the sequence is GITID. The tract at residues 113–116 is G3; sequence DTPG. Residues 113-117 and 168-171 contribute to the GTP site; these read DTPGH and NKMD. Residues 168–171 form a G4 region; that stretch reads NKMD. The segment at 206-208 is G5; sequence SAL.

It belongs to the TRAFAC class translation factor GTPase superfamily. Classic translation factor GTPase family. CysN/NodQ subfamily. Heterodimer composed of CysD, the smaller subunit, and CysN.

The catalysed reaction is sulfate + ATP + H(+) = adenosine 5'-phosphosulfate + diphosphate. It participates in sulfur metabolism; hydrogen sulfide biosynthesis; sulfite from sulfate: step 1/3. In terms of biological role, with CysD forms the ATP sulfurylase (ATPS) that catalyzes the adenylation of sulfate producing adenosine 5'-phosphosulfate (APS) and diphosphate, the first enzymatic step in sulfur assimilation pathway. APS synthesis involves the formation of a high-energy phosphoric-sulfuric acid anhydride bond driven by GTP hydrolysis by CysN coupled to ATP hydrolysis by CysD. The sequence is that of Sulfate adenylyltransferase subunit 1 from Salmonella agona (strain SL483).